A 400-amino-acid polypeptide reads, in one-letter code: Imidazolonepropionase (400 aa).

Residues histidine 68 and histidine 70 each coordinate Fe(3+). Residues histidine 68 and histidine 70 each coordinate Zn(2+). Arginine 77, tyrosine 140, and histidine 173 together coordinate 4-imidazolone-5-propanoate. Tyrosine 140 lines the N-formimidoyl-L-glutamate pocket. Histidine 238 lines the Fe(3+) pocket. A Zn(2+)-binding site is contributed by histidine 238. Glutamine 241 provides a ligand contact to 4-imidazolone-5-propanoate. Aspartate 313 lines the Fe(3+) pocket. Aspartate 313 is a Zn(2+) binding site. Positions 315 and 317 each coordinate N-formimidoyl-L-glutamate. Threonine 318 is a binding site for 4-imidazolone-5-propanoate.

This sequence belongs to the metallo-dependent hydrolases superfamily. HutI family. Zn(2+) serves as cofactor. It depends on Fe(3+) as a cofactor.

The protein resides in the cytoplasm. It catalyses the reaction 4-imidazolone-5-propanoate + H2O = N-formimidoyl-L-glutamate. It functions in the pathway amino-acid degradation; L-histidine degradation into L-glutamate; N-formimidoyl-L-glutamate from L-histidine: step 3/3. Functionally, catalyzes the hydrolytic cleavage of the carbon-nitrogen bond in imidazolone-5-propanoate to yield N-formimidoyl-L-glutamate. It is the third step in the universal histidine degradation pathway. This is Imidazolonepropionase from Paracoccus denitrificans (strain Pd 1222).